A 236-amino-acid polypeptide reads, in one-letter code: Apoptosis regulator Bcl-2 (236 aa).

Positions 10-30 (DNREIVMKYIHYKLSQRGYEW) match the BH4 motif. Threonine 69 is subject to Phosphothreonine; by MAPK8. At serine 70 the chain carries Phosphoserine; by MAPK8 and PKC. Serine 84 bears the Phosphoserine; by MAPK8 mark. The short motif at 90–104 (VHLTLRRAGDDFSRR) is the BH3 element. The short motif at 133-152 (ELFRDGVNWGRIVAFFEFGG) is the BH1 element. A BH2 motif is present at residues 184–199 (TWIQDNGGWDAFVELY). The chain crosses the membrane as a helical span at residues 209–230 (FSWLSLKALLSLALVGACITLG).

It belongs to the Bcl-2 family. Forms homodimers, and heterodimers with BAX, BAD, BAK and Bcl-X(L). Heterodimerization with BAX requires intact BH1 and BH2 motifs, and is necessary for anti-apoptotic activity. Component of the complex, at least composed of LRPPRC, BECN1 and BCL2; the interactions prevent BECN1 from forming an autophagy-inducing complex with PIK3C3. Interacts with EI24. Also interacts with APAF1, BBC3, BCL2L1, BNIPL, MRPL41 and TP53BP2. Binding to FKBP8 seems to target BCL2 to the mitochondria and probably interferes with the binding of BCL2 to its targets. Interacts with BAG1 in an ATP-dependent manner. Interacts with RAF1 (the 'Ser-338' and 'Ser-339' phosphorylated form). Interacts (via the BH4 domain) with EGLN3; the interaction prevents the formation of the BAX-BCL2 complex and inhibits the anti-apoptotic activity of BCL2. Interacts with G0S2; this interaction also prevents the formation of the anti-apoptotic BAX-BCL2 complex. Interacts with RTL10/BOP. Interacts with the SCF(FBXO10) complex. Interacts (via the loop between motifs BH4 and BH3) with NLRP1 (via LRR repeats), but not with NLRP2, NLRP3, NLRP4, PYCARD, nor MEFV. Interacts with GIMAP3/IAN4, GIMAP4/IAN1 and GIMAP5/IAN5. Interacts with BCAP31. Interacts with IRF3; the interaction is inhibited by Sendai virus infection. Interacts with BECN1; thereby inhibiting autophagy in non-starvation conditions. Interacts with AMBRA1; thereby inhibiting autophagy. Post-translationally, phosphorylation/dephosphorylation on Ser-70 regulates anti-apoptotic activity. Growth factor-stimulated phosphorylation on Ser-70 by PKC is required for the anti-apoptosis activity and occurs during the G2/M phase of the cell cycle. In the absence of growth factors, BCL2 appears to be phosphorylated by other protein kinases such as ERKs and stress-activated kinases. Phosphorylated by MAPK8/JNK1 at Thr-69, Ser-70 and Ser-84, which stimulates starvation-induced autophagy. Dephosphorylated by protein phosphatase 2A (PP2A). In terms of processing, proteolytically cleaved by caspases during apoptosis. The cleaved protein, lacking the BH4 motif, has pro-apoptotic activity, causes the release of cytochrome c into the cytosol promoting further caspase activity. Monoubiquitinated by PRKN, leading to an increase in its stability. Ubiquitinated by SCF(FBXO10), leading to its degradation by the proteasome.

It is found in the mitochondrion outer membrane. The protein localises to the nucleus membrane. Its subcellular location is the endoplasmic reticulum membrane. It localises to the cytoplasm. In terms of biological role, suppresses apoptosis in a variety of cell systems including factor-dependent lymphohematopoietic and neural cells. Regulates cell death by controlling the mitochondrial membrane permeability. Appears to function in a feedback loop system with caspases. Inhibits caspase activity either by preventing the release of cytochrome c from the mitochondria and/or by binding to the apoptosis-activating factor (APAF-1). Also acts as an inhibitor of autophagy: interacts with BECN1 and AMBRA1 during non-starvation conditions and inhibits their autophagy function. May attenuate inflammation by impairing NLRP1-inflammasome activation, hence CASP1 activation and IL1B release. This chain is Apoptosis regulator Bcl-2 (BCL2), found in Canis lupus familiaris (Dog).